Consider the following 832-residue polypeptide: Beta-galactosidase (832 aa).

Positions 1 to 25 (MALKLVLMLMVALLAAVWSPPAVTA) are cleaved as a signal peptide. Glu183 serves as the catalytic Proton donor. Glu252 functions as the Nucleophile in the catalytic mechanism. In terms of domain architecture, SUEL-type lectin spans 741–832 (AYGRPKVHLS…KKLAVEAICE (92 aa)).

The protein belongs to the glycosyl hydrolase 35 family.

The protein localises to the secreted. Its subcellular location is the extracellular space. The protein resides in the apoplast. The enzyme catalyses Hydrolysis of terminal non-reducing beta-D-galactose residues in beta-D-galactosides.. This is Beta-galactosidase from Asparagus officinalis (Garden asparagus).